Reading from the N-terminus, the 95-residue chain is Small ribosomal subunit protein bS18 (95 aa).

It belongs to the bacterial ribosomal protein bS18 family. Part of the 30S ribosomal subunit. Forms a tight heterodimer with protein bS6.

Its function is as follows. Binds as a heterodimer with protein bS6 to the central domain of the 16S rRNA, where it helps stabilize the platform of the 30S subunit. This Rickettsia typhi (strain ATCC VR-144 / Wilmington) protein is Small ribosomal subunit protein bS18.